A 739-amino-acid chain; its full sequence is DEAD-box ATP-dependent RNA helicase 32 (739 aa).

The Q motif signature appears at 71 to 99 (RKFAQLPISDKTKRGLKDAKYVDMTDVQS). The Helicase ATP-binding domain maps to 102-277 (IPHALCGRDI…RLSLRDPEYI (176 aa)). 115–122 (ARTGSGKT) provides a ligand contact to ATP. Residues 225-228 (DEAD) carry the DEAD box motif. The Helicase C-terminal domain maps to 303–461 (KLDMLWSFIK…EVSRLLAALL (159 aa)). Residues 643-689 (GAEMRKADIEDKKVDKERRREKRMKQKIKRKRGAMEDEEEEEEEDHD) are a coiled coil. Residues 656 to 725 (VDKERRREKR…GGKINTDSLS (70 aa)) form a disordered region. Residues 661–674 (RREKRMKQKIKRKR) show a composition bias toward basic residues. Residues 678-688 (EDEEEEEEEDH) are compositionally biased toward acidic residues.

Belongs to the DEAD box helicase family. DDX10/DBP4 subfamily.

It catalyses the reaction ATP + H2O = ADP + phosphate + H(+). The protein is DEAD-box ATP-dependent RNA helicase 32 (RH32) of Arabidopsis thaliana (Mouse-ear cress).